A 243-amino-acid chain; its full sequence is Probable 2-phosphosulfolactate phosphatase (243 aa).

The protein belongs to the ComB family. Mg(2+) is required as a cofactor.

The enzyme catalyses (2R)-O-phospho-3-sulfolactate + H2O = (2R)-3-sulfolactate + phosphate. This Prochlorococcus marinus (strain SARG / CCMP1375 / SS120) protein is Probable 2-phosphosulfolactate phosphatase.